A 547-amino-acid chain; its full sequence is Tripartite motif-containing protein 5 (547 aa).

Alanine 2 is modified (N-acetylalanine). The segment at 15–59 (CPICLDLLTEPLSLDCGHSFCQACITADHKESTLHQGERSCPLCR) adopts an RING-type zinc-finger fold. Serine 86 carries the phosphoserine modification. A B box-type zinc finger spans residues 91–132 (QKVDRCARHGEKLLLFCQQHGNVICWLCERSQEHRGHSTFLV). Zn(2+) contacts are provided by cysteine 96, histidine 99, cysteine 118, and histidine 124. A coiled-coil region spans residues 132–224 (VEEVAQKYRE…LAQSENDMVL (93 aa)). The interval 186-199 (FKQLRDILDCEESN) is required for interaction with GABARAP and for autophagy. One can recognise a B30.2/SPRY domain in the interval 280 to 547 (PNLKGMLQVF…LPMTLCSPSS (268 aa)).

The protein belongs to the TRIM/RBCC family. In terms of assembly, can form homodimers and homotrimers. In addition to lower-order dimerization, also exhibits a higher-order multimerization and both low- and high-order multimerizations are essential for its restriction activity. Interacts with BTBD1 and BTBD2. Interacts with PSMC4, PSMC5, PSMD7 and HSPA8/HSC70. Interacts (via B30.2/SPRY domain) with HSPA1A/B. Interacts with PSMC2, MAP3K7/TAK1, TAB2 and TAB3. Interacts with SQSTM1. Interacts with TRIM6 and TRIM34. Interacts with ULK1 (phosphorylated form), GABARAP, GABARAPL1, GABARAPL2, MAP1LC3A, MAP1LC3C and BECN1. Degraded in a proteasome-independent fashion in the absence of viral infection but in a proteasome-dependent fashion following exposure to restriction sensitive virus. Post-translationally, autoubiquitinated in a RING finger- and UBE2D2-dependent manner. Monoubiquitinated by TRIM21. Deubiquitinated by Yersinia YopJ. Ubiquitination may not lead to proteasomal degradation.

It is found in the cytoplasm. The protein resides in the nucleus. It catalyses the reaction S-ubiquitinyl-[E2 ubiquitin-conjugating enzyme]-L-cysteine + [acceptor protein]-L-lysine = [E2 ubiquitin-conjugating enzyme]-L-cysteine + N(6)-ubiquitinyl-[acceptor protein]-L-lysine.. It participates in protein modification; protein ubiquitination. Its function is as follows. Capsid-specific restriction factor that prevents infection from non-host-adapted retroviruses. Blocks viral replication early in the life cycle, after viral entry but before reverse transcription. In addition to acting as a capsid-specific restriction factor, also acts as a pattern recognition receptor that activates innate immune signaling in response to the retroviral capsid lattice. Binding to the viral capsid triggers its E3 ubiquitin ligase activity, and in concert with the heterodimeric ubiquitin conjugating enzyme complex UBE2V1-UBE2N (also known as UBC13-UEV1A complex) generates 'Lys-63'-linked polyubiquitin chains, which in turn are catalysts in the autophosphorylation of the MAP3K7/TAK1 complex (includes TAK1, TAB2, and TAB3). Activation of the MAP3K7/TAK1 complex by autophosphorylation results in the induction and expression of NF-kappa-B and MAPK-responsive inflammatory genes, thereby leading to an innate immune response in the infected cell. Plays a role in regulating autophagy through activation of autophagy regulator BECN1 by causing its dissociation from its inhibitors BCL2 and TAB2. This is Tripartite motif-containing protein 5 (TRIM5) from Lagothrix lagotricha (Brown woolly monkey).